Consider the following 1748-residue polypeptide: WD repeat-containing protein 90 (1748 aa).

The segment at 1–207 (MARAWQHPFL…VTPMPREMAF (207 aa)) is binds with microtubules. S241 carries the phosphoserine modification. The interval 274 to 308 (QTPSPTASGRAALAPRPFPEVSLSQERSDASNADG) is disordered. 21 WD repeats span residues 407-450 (GHTD…CLFR), 452-494 (PMHV…LGGE), 501-541 (AHTD…LRSC), 615-654 (SSGP…VLLE), 656-695 (EHEG…YHML), 698-737 (SHTA…QLYD), 740-779 (SSED…VLVE), 782-821 (CHRG…WHVL), 882-922 (SRLD…IIRE), 926-964 (VHPE…SPGP), 969-1009 (GHSE…QSFP), 1156-1201 (GHSA…CQHL), 1204-1245 (PHST…LVSS), 1247-1286 (RLPE…ADIS), 1298-1326 (VGAG…VCVW), 1327-1376 (DTRA…ELRC), 1433-1472 (GHRS…LVIQ), 1475-1520 (VLNQ…MELK), 1523-1562 (PHPV…TFRV), 1568-1614 (GAPI…NHCE), and 1715-1748 (GHDN…VPGL). The disordered stretch occupies residues 1004–1071 (SDQSFPGAPP…GARDTRNSGA (68 aa)).

The protein belongs to the WD repeat WDR90/POC16 family.

Its subcellular location is the cytoplasm. It localises to the cytoskeleton. The protein localises to the microtubule organizing center. The protein resides in the centrosome. It is found in the centriole. Its subcellular location is the centriolar satellite. Its function is as follows. Microtubule-binding protein that plays a crucial role in ensuring inner core protein localization within the centriole core, as well as in maintaining the microtubule wall integrity and the overall centriole roundness and stability. Required for efficient primary cilium formation. The sequence is that of WD repeat-containing protein 90 (WDR90) from Homo sapiens (Human).